Consider the following 96-residue polypeptide: Keratin-associated protein 12-3 (96 aa).

14 tandem repeats follow at residues 10 to 14, 15 to 19, 24 to 28, 30 to 34, 35 to 39, 45 to 49, 50 to 54, 55 to 59, 60 to 64, 70 to 74, 75 to 79, 80 to 84, 85 to 89, and 90 to 94. The 14 X 5 AA approximate repeats stretch occupies residues 10–94; the sequence is CQPTCCIHSP…CRPISCSTPS (85 aa).

This sequence belongs to the KRTAP type 12 family. Interacts with hair keratins. Restricted to a narrow region of the hair fiber cuticle, lying approximately 20 cell layers above the apex of the dermal papilla of the hair root; not detected in any other tissues.

Functionally, in the hair cortex, hair keratin intermediate filaments are embedded in an interfilamentous matrix, consisting of hair keratin-associated proteins (KRTAP), which are essential for the formation of a rigid and resistant hair shaft through their extensive disulfide bond cross-linking with abundant cysteine residues of hair keratins. The matrix proteins include the high-sulfur and high-glycine-tyrosine keratins. In Homo sapiens (Human), this protein is Keratin-associated protein 12-3 (KRTAP12-3).